Reading from the N-terminus, the 168-residue chain is MKMVKSIAAGLTAAAAIGAAAAGVTSIMAGGPVVYQMQPVVFGAPLPLDPASAPDVPTAAQLTSLLNSLADPNVSFANKGSLVEGGIGGTEARIADHKLKKAAEHGDLPLSFSVTNIQPAAAGSATADVSVSGPKLSSPVTQNVTFVNQGGWMLSRASAMELLQAAGN.

The signal sequence occupies residues 1–22; that stretch reads MKMVKSIAAGLTAAAAIGAAAA. Positions 23-48 are excised as a propeptide; the sequence is GVTSIMAGGPVVYQMQPVVFGAPLPL.

This sequence belongs to the MTB12 family.

It is found in the secreted. In terms of biological role, may play a role in the development of protective immune responses. The polypeptide is Low molecular weight antigen MTB12 (mtb12) (Mycobacterium bovis (strain ATCC BAA-935 / AF2122/97)).